A 292-amino-acid polypeptide reads, in one-letter code: Malonyl-[acyl-carrier protein] O-methyltransferase (292 aa).

Belongs to the methyltransferase superfamily.

It catalyses the reaction malonyl-[ACP] + S-adenosyl-L-methionine = malonyl-[ACP] methyl ester + S-adenosyl-L-homocysteine. Its pathway is cofactor biosynthesis; biotin biosynthesis. In terms of biological role, converts the free carboxyl group of a malonyl-thioester to its methyl ester by transfer of a methyl group from S-adenosyl-L-methionine (SAM). It allows to synthesize pimeloyl-ACP via the fatty acid synthetic pathway. The polypeptide is Malonyl-[acyl-carrier protein] O-methyltransferase (Alcanivorax borkumensis (strain ATCC 700651 / DSM 11573 / NCIMB 13689 / SK2)).